The chain runs to 967 residues: Kinesin-like protein KIF28P (967 aa).

In terms of domain architecture, Kinesin motor spans 7-355 (DSVKAVRVRP…LRYAERERKI (349 aa)). 111–118 (GQTGSGKS) is an ATP binding site. The 63-residue stretch at 410–472 (APCPRPALSP…LQHLDRLILG (63 aa)) folds into the FHA domain. Positions 822-851 (NQIPELYLKLLKLEQETEPLRNINRALREE) form a coiled coil.

Belongs to the TRAFAC class myosin-kinesin ATPase superfamily. Kinesin family.

It is found in the mitochondrion membrane. Functionally, microtubule-dependent motor protein required for mitochondrion morphology and transport of mitochondria in neuronal cells. The protein is Kinesin-like protein KIF28P (KIF28P) of Homo sapiens (Human).